The following is a 379-amino-acid chain: Chaperone protein DnaJ (379 aa).

The J domain maps to 5-70 (DYYEVLGLSK…EKKAMYDQYG (66 aa)). A CR-type zinc finger spans residues 136 to 214 (GCKKDIRIHT…CHGDGRVHKA (79 aa)). 8 residues coordinate Zn(2+): C149, C152, C166, C169, C188, C191, C202, and C205. CXXCXGXG motif repeat units follow at residues 149 to 156 (CDTCHGTG), 166 to 173 (CSHCHGSG), 188 to 195 (CPSCHGTG), and 202 to 209 (CRSCHGDG).

Belongs to the DnaJ family. As to quaternary structure, homodimer. Zn(2+) is required as a cofactor.

It is found in the cytoplasm. Participates actively in the response to hyperosmotic and heat shock by preventing the aggregation of stress-denatured proteins and by disaggregating proteins, also in an autonomous, DnaK-independent fashion. Unfolded proteins bind initially to DnaJ; upon interaction with the DnaJ-bound protein, DnaK hydrolyzes its bound ATP, resulting in the formation of a stable complex. GrpE releases ADP from DnaK; ATP binding to DnaK triggers the release of the substrate protein, thus completing the reaction cycle. Several rounds of ATP-dependent interactions between DnaJ, DnaK and GrpE are required for fully efficient folding. Also involved, together with DnaK and GrpE, in the DNA replication of plasmids through activation of initiation proteins. The polypeptide is Chaperone protein DnaJ (Mannheimia haemolytica (Pasteurella haemolytica)).